The sequence spans 280 residues: 2,3,4,5-tetrahydropyridine-2,6-dicarboxylate N-succinyltransferase (280 aa).

Residues Arg109 and Asp146 each coordinate substrate.

Belongs to the transferase hexapeptide repeat family. As to quaternary structure, homotrimer.

Its subcellular location is the cytoplasm. The catalysed reaction is (S)-2,3,4,5-tetrahydrodipicolinate + succinyl-CoA + H2O = (S)-2-succinylamino-6-oxoheptanedioate + CoA. It participates in amino-acid biosynthesis; L-lysine biosynthesis via DAP pathway; LL-2,6-diaminopimelate from (S)-tetrahydrodipicolinate (succinylase route): step 1/3. The sequence is that of 2,3,4,5-tetrahydropyridine-2,6-dicarboxylate N-succinyltransferase from Blochmanniella floridana.